The sequence spans 525 residues: GMP synthase [glutamine-hydrolyzing] (525 aa).

Positions 9 to 207 constitute a Glutamine amidotransferase type-1 domain; the sequence is RILILDFGSQ…VLDICQCEKL (199 aa). Cys-86 serves as the catalytic Nucleophile. Catalysis depends on residues His-181 and Glu-183. A GMPS ATP-PPase domain is found at 208–400; the sequence is WTPDAIIEDA…LGLPYDMLYR (193 aa). 235–241 contacts ATP; that stretch reads SGGVDSS.

As to quaternary structure, homodimer.

It catalyses the reaction XMP + L-glutamine + ATP + H2O = GMP + L-glutamate + AMP + diphosphate + 2 H(+). Its pathway is purine metabolism; GMP biosynthesis; GMP from XMP (L-Gln route): step 1/1. Catalyzes the synthesis of GMP from XMP. The sequence is that of GMP synthase [glutamine-hydrolyzing] from Pseudoalteromonas atlantica (strain T6c / ATCC BAA-1087).